The chain runs to 373 residues: 3',5'-bisphosphate nucleotidase AHL (373 aa).

Residue D52 is the Proton acceptor of the active site. Positions 77, 144, 146, and 147 each coordinate Mg(2+). T149 acts as the Proton acceptor in catalysis. Residues T149, S281, K284, K298, and D310 each contribute to the adenosine 3',5'-bisphosphate site. AMP-binding residues include S281, K284, K298, and D310. D310 is a Mg(2+) binding site.

Belongs to the inositol monophosphatase superfamily. It depends on Mg(2+) as a cofactor. In terms of tissue distribution, expressed in roots, leaves, stems, flowers and siliques.

It carries out the reaction adenosine 3',5'-bisphosphate + H2O = AMP + phosphate. It catalyses the reaction 3'-phosphoadenylyl sulfate + H2O = adenosine 5'-phosphosulfate + phosphate. With respect to regulation, inhibited by Li(+) (IC(50)=10 mM), Na(+) (IC(50)=50 mM) and Ca(2+) (IC(50)=0.06 mM). Its function is as follows. Phosphatase that converts adenosine 3'-phosphate 5'-phosphosulfate (PAPS) to adenosine 5'-phosphosulfate (APS) and 3'-phosphoadenosine 5'-phosphate (3'-PAP) to AMP. May regulate the flux of sulfur in the sulfur-activation pathway by converting PAPS to APS. Prevents both the toxicity of PAP on RNA processing enzymes as well as the product inhibition by PAP of sulfate conjugation. This Arabidopsis thaliana (Mouse-ear cress) protein is 3',5'-bisphosphate nucleotidase AHL.